We begin with the raw amino-acid sequence, 91 residues long: Small ribosomal subunit protein uS19 (91 aa).

It belongs to the universal ribosomal protein uS19 family.

In terms of biological role, protein S19 forms a complex with S13 that binds strongly to the 16S ribosomal RNA. The chain is Small ribosomal subunit protein uS19 from Burkholderia cenocepacia (strain HI2424).